Reading from the N-terminus, the 209-residue chain is Interleukin-6 (209 aa).

Positions 1–26 are cleaved as a signal peptide; it reads RFTSAFSPVAFSLGLLLVMATAFPTP. Residues 28–47 are disordered; it reads PVGGESQADATSNRPPLTSP. Cys-69 and Cys-75 are disulfide-bonded. Ser-78 carries the phosphoserine modification. The cysteines at positions 98 and 108 are disulfide-linked.

This sequence belongs to the IL-6 superfamily. Component of a hexamer of two molecules each of IL6, IL6R and IL6ST; first binds to IL6R to associate with the signaling subunit IL6ST. Interacts with IL6R (via the N-terminal ectodomain); this interaction may be affected by IL6R-binding with SORL1, hence decreasing IL6 cis signaling. Interacts with SORL1 (via the N-terminal ectodomain); this interaction leads to IL6 internalization and lysosomal degradation. May form a trimeric complex with the soluble SORL1 ectodomain and soluble IL6R receptor; this interaction might stabilize circulating IL6, hence promoting IL6 trans signaling.

The protein resides in the secreted. Cytokine with a wide variety of biological functions in immunity, tissue regeneration, and metabolism. Binds to IL6R, then the complex associates to the signaling subunit IL6ST/gp130 to trigger the intracellular IL6-signaling pathway. The interaction with the membrane-bound IL6R and IL6ST stimulates 'classic signaling', whereas the binding of IL6 and soluble IL6R to IL6ST stimulates 'trans-signaling'. Alternatively, 'cluster signaling' occurs when membrane-bound IL6:IL6R complexes on transmitter cells activate IL6ST receptors on neighboring receiver cells. Functionally, IL6 is a potent inducer of the acute phase response. Rapid production of IL6 contributes to host defense during infection and tissue injury, but excessive IL6 synthesis is involved in disease pathology. In the innate immune response, is synthesized by myeloid cells, such as macrophages and dendritic cells, upon recognition of pathogens through toll-like receptors (TLRs) at the site of infection or tissue injury. In the adaptive immune response, is required for the differentiation of B cells into immunoglobulin-secreting cells. Plays a major role in the differentiation of CD4(+) T cell subsets. Essential factor for the development of T follicular helper (Tfh) cells that are required for the induction of germinal-center formation. Required to drive naive CD4(+) T cells to the Th17 lineage. Also required for proliferation of myeloma cells and the survival of plasmablast cells. In terms of biological role, acts as an essential factor in bone homeostasis and on vessels directly or indirectly by induction of VEGF, resulting in increased angiogenesis activity and vascular permeability. Induces, through 'trans-signaling' and synergistically with IL1B and TNF, the production of VEGF. Involved in metabolic controls, is discharged into the bloodstream after muscle contraction increasing lipolysis and improving insulin resistance. 'Trans-signaling' in central nervous system also regulates energy and glucose homeostasis. Mediates, through GLP-1, crosstalk between insulin-sensitive tissues, intestinal L cells and pancreatic islets to adapt to changes in insulin demand. Also acts as a myokine. Plays a protective role during liver injury, being required for maintenance of tissue regeneration. Also has a pivotal role in iron metabolism by regulating HAMP/hepcidin expression upon inflammation or bacterial infection. Through activation of IL6ST-YAP-NOTCH pathway, induces inflammation-induced epithelial regeneration. The chain is Interleukin-6 (IL6) from Phoca vitulina (Harbor seal).